The following is a 262-amino-acid chain: Small ribosomal subunit protein eS1 (262 aa).

This sequence belongs to the eukaryotic ribosomal protein eS1 family. As to quaternary structure, component of the small ribosomal subunit. Mature ribosomes consist of a small (40S) and a large (60S) subunit. The 40S subunit contains about 32 different proteins and 1 molecule of RNA (18S). The 60S subunit contains about 42 different proteins and 3 molecules of RNA (28S, 5.8S and 5S).

The protein resides in the cytoplasm. Component of the ribosome, a large ribonucleoprotein complex responsible for the synthesis of proteins in the cell. The small ribosomal subunit (SSU) binds messenger RNAs (mRNAs) and translates the encoded message by selecting cognate aminoacyl-transfer RNA (tRNA) molecules. The large subunit (LSU) contains the ribosomal catalytic site termed the peptidyl transferase center (PTC), which catalyzes the formation of peptide bonds, thereby polymerizing the amino acids delivered by tRNAs into a polypeptide chain. The nascent polypeptides leave the ribosome through a tunnel in the LSU and interact with protein factors that function in enzymatic processing, targeting, and the membrane insertion of nascent chains at the exit of the ribosomal tunnel. This is Small ribosomal subunit protein eS1 from Plasmodium falciparum (isolate 3D7).